A 474-amino-acid polypeptide reads, in one-letter code: Coiled-coil domain-containing protein 149 (474 aa).

2 coiled-coil regions span residues 1-199 and 259-286; these read MANQ…RKNS and IQHQRQTNKILGNRVAELEKKLRTLEVS. Disordered stretches follow at residues 301 to 388 and 405 to 474; these read SDPT…EEEV and AELE…TVKT. The span at 323–337 shows a compositional bias: basic and acidic residues; the sequence is TENKADPKDGEAQKQ. Residues 343 to 353 show a composition bias toward low complexity; sequence CAAAEALTAPE. Residues 385–414 adopt a coiled-coil conformation; sequence EEEVNSLGREIIKLTKEQAAAELEEVRRES.

This sequence belongs to the CCDC149 family.

The chain is Coiled-coil domain-containing protein 149 (CCDC149) from Homo sapiens (Human).